The sequence spans 436 residues: 3-ketoacyl-CoA thiolase (436 aa).

Catalysis depends on C99, which acts as the Acyl-thioester intermediate. Active-site proton acceptor residues include H392 and C422.

It belongs to the thiolase-like superfamily. Thiolase family. In terms of assembly, heterotetramer of two alpha chains (FadJ) and two beta chains (FadI).

It is found in the cytoplasm. The enzyme catalyses an acyl-CoA + acetyl-CoA = a 3-oxoacyl-CoA + CoA. It participates in lipid metabolism; fatty acid beta-oxidation. Its function is as follows. Catalyzes the final step of fatty acid oxidation in which acetyl-CoA is released and the CoA ester of a fatty acid two carbons shorter is formed. This chain is 3-ketoacyl-CoA thiolase, found in Shigella flexneri serotype 5b (strain 8401).